Reading from the N-terminus, the 205-residue chain is Small ribosomal subunit protein uS4 (205 aa).

The segment covering methionine 1–aspartate 12 has biased composition (basic residues). The disordered stretch occupies residues methionine 1 to glycine 49. One can recognise an S4 RNA-binding domain in the interval arginine 94–alanine 156.

It belongs to the universal ribosomal protein uS4 family. In terms of assembly, part of the 30S ribosomal subunit. Contacts protein S5. The interaction surface between S4 and S5 is involved in control of translational fidelity.

Its function is as follows. One of the primary rRNA binding proteins, it binds directly to 16S rRNA where it nucleates assembly of the body of the 30S subunit. In terms of biological role, with S5 and S12 plays an important role in translational accuracy. The polypeptide is Small ribosomal subunit protein uS4 (Methylobacterium nodulans (strain LMG 21967 / CNCM I-2342 / ORS 2060)).